Consider the following 512-residue polypeptide: ATP synthase subunit alpha (512 aa).

169–176 (GDRQTGKT) is an ATP binding site.

The protein belongs to the ATPase alpha/beta chains family. As to quaternary structure, F-type ATPases have 2 components, CF(1) - the catalytic core - and CF(0) - the membrane proton channel. CF(1) has five subunits: alpha(3), beta(3), gamma(1), delta(1), epsilon(1). CF(0) has three main subunits: a(1), b(2) and c(9-12). The alpha and beta chains form an alternating ring which encloses part of the gamma chain. CF(1) is attached to CF(0) by a central stalk formed by the gamma and epsilon chains, while a peripheral stalk is formed by the delta and b chains.

Its subcellular location is the cell inner membrane. The enzyme catalyses ATP + H2O + 4 H(+)(in) = ADP + phosphate + 5 H(+)(out). Produces ATP from ADP in the presence of a proton gradient across the membrane. The alpha chain is a regulatory subunit. The sequence is that of ATP synthase subunit alpha from Rickettsia canadensis (strain McKiel).